The chain runs to 240 residues: uncharacterized protein (240 aa).

This is an uncharacterized protein from Methanocaldococcus jannaschii (strain ATCC 43067 / DSM 2661 / JAL-1 / JCM 10045 / NBRC 100440) (Methanococcus jannaschii).